Consider the following 149-residue polypeptide: Large ribosomal subunit protein bL9 (149 aa).

The protein belongs to the bacterial ribosomal protein bL9 family.

Binds to the 23S rRNA. The chain is Large ribosomal subunit protein bL9 from Xanthomonas oryzae pv. oryzae (strain MAFF 311018).